A 969-amino-acid polypeptide reads, in one-letter code: MAFALGQRWISDTESDLGLGTVVALDARTVTLMFAASEENRVYASNDAPVTRVVFNVGDVVECQEGWSLKVEQVVEENGLYTYLGTREDTEETGVALREIFLSNQIRFNKPQDKMYAGQIDRMDNFVLRYRALKNQYEQHRSPMRGLCGMRAGLIPHQLYIAHEVGRRHAPRVLLADEVGLGKTIEAGMIIHQQVLLGRAERILIVVPETLQHQWLVEMMRRFNLHFSIFDEERCVEAFAESDNPFDTQQYVLCSLDFLRKSRKRFEQALEAEWDLLVVDEAHHLEWSQDKPSRGYQVVEGLAERTPGVLLLTATPEQLGRESHFARLRLLDSDRFYDYAAFVEEEAQYAPVADAITALFSGVKLADEAKNQITELLSEQDVEPLFRIIESNADEESKAIARQELIDNLMDRHGTGRVLFRNTRAAIKGFPVRNVHLLPMPIPTQYTTSMRVSGMIGGKLAPEARAMKNLYPEEIFQEFEGEESSWWQFDCRVNWLLEKLKAQRSEKVLVIASRASTALQLEQALREREGIRATVFHEGMSILERDKAAAYFAQEEGGAQVLICSEIGSEGRNFQFANQLVMFDLPFNPDLLEQRIGRLDRIGQKRDIDIHVPYLQGTAQEVLARWFNEGLNAFAETCPTGRTVYDQVSDQLIEMLASGSNEALDDVIAESAKLNQALKADLEQGRDRLLEMHSNGGEKAQQIVAEIAAKDGDTNLVSFALSLFDTIGLNQDDKGENAIVVTPSEHMMVPSYPGLPYEGATITFDRDTALSREDMHFISWEHPMIQGGIDLLMSEGVGTCAVSLLKNKALPVGTLLLELIYAVDAQAPKRSGIGRFLPRTPIRLMMDARGNDLSGQVEFESFNRQLSPVNRHLASKLVSSVQNDIHRLIEAGDQLVVENVEAIRQQAQQEMQQSLNSELERLQALKAVNPNIRDEEIEAIDAQIKELNGYISKAQFQLDSLRLIVVSHN.

The Helicase ATP-binding domain occupies 164-334; the sequence is EVGRRHAPRV…FARLRLLDSD (171 aa). 177–184 is a binding site for ATP; sequence DEVGLGKT. A DEAH box motif is present at residues 280-283; sequence DEAH. The 177-residue stretch at 492-668 folds into the Helicase C-terminal domain; the sequence is RVNWLLEKLK…GSNEALDDVI (177 aa).

This sequence belongs to the SNF2/RAD54 helicase family. RapA subfamily. In terms of assembly, interacts with the RNAP. Has a higher affinity for the core RNAP than for the holoenzyme. Its ATPase activity is stimulated by binding to RNAP.

Transcription regulator that activates transcription by stimulating RNA polymerase (RNAP) recycling in case of stress conditions such as supercoiled DNA or high salt concentrations. Probably acts by releasing the RNAP, when it is trapped or immobilized on tightly supercoiled DNA. Does not activate transcription on linear DNA. Probably not involved in DNA repair. The chain is RNA polymerase-associated protein RapA from Vibrio vulnificus (strain CMCP6).